The primary structure comprises 129 residues: Prefoldin subunit 6 (129 aa).

Ala2 bears the N-acetylalanine mark. N6-acetyllysine is present on Lys21. An N6-acetyllysine; alternate modification is found at Lys66. Lys66 participates in a covalent cross-link: Glycyl lysine isopeptide (Lys-Gly) (interchain with G-Cter in SUMO1); alternate. Lys66 is covalently cross-linked (Glycyl lysine isopeptide (Lys-Gly) (interchain with G-Cter in SUMO2); alternate).

It belongs to the prefoldin subunit beta family. Heterohexamer of two PFD-alpha type and four PFD-beta type subunits. Component of the PAQosome complex which is responsible for the biogenesis of several protein complexes and which consists of R2TP complex members RUVBL1, RUVBL2, RPAP3 and PIH1D1, URI complex members PFDN2, PFDN6, PDRG1, UXT and URI1 as well as ASDURF, POLR2E and DNAAF10/WDR92.

Binds specifically to cytosolic chaperonin (c-CPN) and transfers target proteins to it. Binds to nascent polypeptide chain and promotes folding in an environment in which there are many competing pathways for nonnative proteins. The sequence is that of Prefoldin subunit 6 (PFDN6) from Bos taurus (Bovine).